Reading from the N-terminus, the 593-residue chain is ETS-related transcription factor Elf-2 (593 aa).

S107 carries the post-translational modification Phosphoserine. Residues 146–201 are disordered; the sequence is VEVSTEESEPMDTSPIPTSPDSHEPMKKKKVGRKPKTQQSPISNGSPELGIKKKPR. Over residues 171 to 181 the composition is skewed to basic residues; the sequence is MKKKKVGRKPK. Position 182 is a phosphothreonine (T182). Polar residues predominate over residues 182 to 191; it reads TQQSPISNGS. A phosphoserine mark is found at S185 and S191. The segment at residues 208-290 is a DNA-binding region (ETS); it reads TYLWEFLLDL…EGQRLVYQFK (83 aa). 2 positions are modified to phosphoserine: S363 and S372. T376 is modified (phosphothreonine). S430 bears the Phosphoserine mark. An Omega-N-methylarginine modification is found at R494. T521 is subject to Phosphothreonine. K536 participates in a covalent cross-link: Glycyl lysine isopeptide (Lys-Gly) (interchain with G-Cter in SUMO2).

It belongs to the ETS family. In terms of assembly, interacts with the LIM domains of LMO2. Interacts via its N-terminal region with RUNX1. Expressed in all fetal and adult tissues examined. Among fetal tissues, highest levels of expression detected in heart, lung, liver and kidney, and lower levels in brain. Among adult tissues, highest levels of expression detected in heart, placenta, lung, skeletal muscle, spleen, thymus, testis and ovary. Moderate expression in prostate, small intestine, kidney, liver and pancreas, and weak expression in colon, brain and peripheral blood lymphocytes.

The protein resides in the nucleus. Its function is as follows. Isoform 1 transcriptionally activates the LYN and BLK promoters and acts synergistically with RUNX1 to transactivate the BLK promoter. Isoform 2 may function in repression of RUNX1-mediated transactivation. This chain is ETS-related transcription factor Elf-2, found in Homo sapiens (Human).